The primary structure comprises 286 residues: MKKTIQRGLFTGALVLMTAMTAKPANAEVNYQALVDADVKAFQGFFRKEFPDVKLEDFGNGVYALDEDARKQWKEMEEFPPYELDVEAGKALFNKPFANGKSLASCFPNGGAVRGMYPYFDEKRKEVVTLEMAINECRVANGEKPYAWEKGDIARVSAYIASISRGQKVDVKVKSKAAYDAYMKGKKFFYAKRGQLNMSCSGCHMEYAGRHLRAEIISPALGHTTHFPVFRSKWGEIGTLHRRYAGCSNNIGAKPFAPQSEEYRDLEFFQTVMSNGLKYNGPASRK.

The first 27 residues, 1 to 27 (MKKTIQRGLFTGALVLMTAMTAKPANA), serve as a signal peptide directing secretion. Cys106 and Cys137 are disulfide-bonded. One can recognise a Cytochrome c domain in the interval 180 to 286 (DAYMKGKKFF…LKYNGPASRK (107 aa)). Residues Cys200 and His204 each coordinate heme. Substrate is bound at residue Arg243. Cys247 contacts heme. Cys247 acts as the Cysteine persulfide intermediate in catalysis.

Belongs to the SoxA family. In terms of assembly, heterodimer of SoxA and SoxX. The SoxAX complex interacts with CT1020, SoxAX-binding protein SaxB (SoxK); this interaction seems to be between SoxA and CT1020 and stimulates catalytic activity of the SoxAX complex. Heme is required as a cofactor. In terms of processing, cysteine persulfide at Cys-247.

The protein resides in the periplasm. It catalyses the reaction L-cysteinyl-[SoxY protein] + thiosulfate + 2 Fe(III)-[cytochrome c] = S-sulfosulfanyl-L-cysteinyl-[SoxY protein] + 2 Fe(II)-[cytochrome c] + 2 H(+). The enzyme catalyses S-sulfanyl-L-cysteinyl-[SoxY protein] + thiosulfate + 2 Fe(III)-[cytochrome c] = S-(2-sulfodisulfanyl)-L-cysteinyl-[SoxY protein] + 2 Fe(II)-[cytochrome c] + 2 H(+). C-type monoheme cytochrome, which is part of the SoxAX cytochrome complex involved in sulfur oxidation. The SoxAX complex catalyzes the formation of a heterodisulfide bond between the conserved cysteine residue on a sulfur carrier SoxYZ complex subunit SoxY and thiosulfate or other inorganic sulfur substrates. This leads to the liberation of two electrons, which may be transferred from the SoxAX complex to another cytochrome c and which then may be used for reductive CO(2) fixation. This Chlorobaculum tepidum (strain ATCC 49652 / DSM 12025 / NBRC 103806 / TLS) (Chlorobium tepidum) protein is L-cysteine S-thiosulfotransferase subunit SoxA.